Reading from the N-terminus, the 819-residue chain is Protein O-mannosyl-transferase tmem260 (819 aa).

A compositionally biased stretch (polar residues) spans 1 to 10 (MNNSPTLSNT). A disordered region spans residues 1 to 68 (MNNSPTLSNT…NNNNNIINVN (68 aa)). Over residues 15–68 (NNNNNSNSNSNSNNNNNNNNNNNNNSNNNNNNNNNVNRNVNNRNNNNNNIINVN) the composition is skewed to low complexity. Residues Asn-18, Asn-38, and Asn-70 are each glycosylated (N-linked (GlcNAc...) asparagine). 7 helical membrane-spanning segments follow: residues 113-133 (IACI…TQYP), 152-172 (VAHP…SHII), 185-205 (FMSS…VYLW), 210-230 (WCGL…MYQI), 232-252 (GEVF…GVWY), 285-305 (LTNQ…LMFI), and 316-336 (ILSN…LLFI). An N-linked (GlcNAc...) asparagine glycan is attached at Asn-349. 4 helical membrane passes run 391–411 (LIIQ…LNLL), 427–447 (MIIF…NLPI), 459–479 (FFMQ…KSIF), and 505–525 (YLLP…NYNL). Asn-531, Asn-686, Asn-693, and Asn-783 each carry an N-linked (GlcNAc...) asparagine glycan.

The protein belongs to the glycosyltransferase 117 (GT117) family.

It is found in the endoplasmic reticulum membrane. It carries out the reaction a di-trans,poly-cis-dolichyl beta-D-mannosyl phosphate + L-seryl-[protein] = 3-O-(alpha-D-mannosyl)-L-seryl-[protein] + a di-trans,poly-cis-dolichyl phosphate + H(+). The catalysed reaction is a di-trans,poly-cis-dolichyl beta-D-mannosyl phosphate + L-threonyl-[protein] = 3-O-(alpha-D-mannosyl)-L-threonyl-[protein] + a di-trans,poly-cis-dolichyl phosphate + H(+). In terms of biological role, O-mannosyl-transferase that transfers mannosyl residues to the hydroxyl group of serine or threonine residues of proteins. The chain is Protein O-mannosyl-transferase tmem260 from Dictyostelium discoideum (Social amoeba).